The following is a 531-amino-acid chain: Tryptophan biosynthesis protein TRP1 (531 aa).

The tract at residues 1-254 is indole-3-glycerol phosphate synthase; the sequence is MGNILEEIAA…TVKDLLQNVT (254 aa). The N-(5'-phosphoribosyl)anthranilate isomerase stretch occupies residues 255 to 531; the sequence is RHSESGEFAL…TLKIDEETEN (277 aa).

This sequence in the N-terminal section; belongs to the TrpC family. The protein in the C-terminal section; belongs to the TrpF family.

It catalyses the reaction N-(5-phospho-beta-D-ribosyl)anthranilate = 1-(2-carboxyphenylamino)-1-deoxy-D-ribulose 5-phosphate. It carries out the reaction 1-(2-carboxyphenylamino)-1-deoxy-D-ribulose 5-phosphate + H(+) = (1S,2R)-1-C-(indol-3-yl)glycerol 3-phosphate + CO2 + H2O. It functions in the pathway amino-acid biosynthesis; L-tryptophan biosynthesis; L-tryptophan from chorismate: step 3/5. It participates in amino-acid biosynthesis; L-tryptophan biosynthesis; L-tryptophan from chorismate: step 4/5. Bifunctional enzyme that catalyzes two sequential steps of tryptophan biosynthetic pathway. This is Tryptophan biosynthesis protein TRP1 (TRP1) from Phytophthora nicotianae (Potato buckeye rot agent).